A 204-amino-acid chain; its full sequence is Terpene cyclase trt1 (204 aa).

A run of 5 helical transmembrane segments spans residues 44–64 (FMSICCDVAWEFVYAFVYPIA), 67–87 (HWAGGIRIWFAMHCVMLFIVA), 103–122 (FARLAYVAITIGFMAGHLAL), 132–154 (FFWSGALCQITASLGSLCLLVCR), and 169–189 (WFYIAITLTLDAIYPVFFFYF).

This sequence belongs to the paxB family.

It is found in the membrane. It functions in the pathway secondary metabolite biosynthesis; terpenoid biosynthesis. In terms of biological role, terpene cyclase; part of the gene cluster that mediates the biosynthesis of terretonin, a fungal meroterpenoid that acts as a mycotoxin. The first step of the pathway is the synthesis of 3,5-dimethylorsellinic acid (DMOA) by the polyketide synthase trt4. DMOA is then prenylated into farnesyl-DMOA by the polyprenyl transferase trt2. Methylation by the methyltransferase trt5 then leads to farnesyl-DMOA methyl ester which is further subject to epoxidation by the FAD-dependent monooxygenase trt8 to yield epoxyfarnesyl-DMOA methyl ester. Cyclization of epoxyfarnesyl-DMOA methyl ester by the terpene cyclase trt1 leads to a tetracycle intermediate which is in turn converted to preterretonin. Dehydrogenase trt9 comes next to transform preterretonin to preterrenoid. The FAD-dependent monooxygenase trt3 is then required for the C-hydroxylation at C16 of preterrenoid to yield terrenoid. The cytochrome P450 trt6 catalyzes three successive oxidations to transform terrenoid into an unstable intermediate, which then undergoes the D-ring expansion and unusual rearrangement of the methoxy group to afford the core skeleton of terretonin. Trt14 catalyzes the D-ring expansion of terretonin involving intramolecular methoxy rearrangement as well as the hydrolysis of the expanded D-ring and the methyl ester moiety. Finally, the nonheme iron-dependent dioxygenase trt7 accomplishes the last two oxidation reactions steps to complete the biosynthesis of terretonin. Terretonin C is produced via spontaneous decarboxylation of the terretonin precursor. Another shunt product of the terretonin biosynthesis is dihydrofarnesyl-DMOA, derived from epoxyfarnesyl-DMOA through hydrolysis of the epoxide. This chain is Terpene cyclase trt1, found in Aspergillus terreus (strain NIH 2624 / FGSC A1156).